The primary structure comprises 79 residues: U-scoloptoxin(15)-Sm1a (79 aa).

An N-terminal signal peptide occupies residues 1-25; that stretch reads MKMNVVVLSVVVLLLFIANIQQTEA.

Belongs to the scoloptoxin-15 family. Post-translationally, contains 2 disulfide bonds. As to expression, expressed by the venom gland.

The protein localises to the secreted. The sequence is that of U-scoloptoxin(15)-Sm1a from Scolopendra morsitans (Tanzanian blue ringleg centipede).